Reading from the N-terminus, the 172-residue chain is Propanediol dehydratase small subunit (172 aa).

Belongs to the diol/glycerol dehydratase small subunit family. In terms of assembly, the propanediol dehydratase enzyme is a heterotrimeric complex composed of a large (PduC), a medium (PduD) and a small (PduE) subunit. The cofactor is adenosylcob(III)alamin.

It is found in the bacterial microcompartment. It carries out the reaction propane-1,2-diol = propanal + H2O. It participates in polyol metabolism; 1,2-propanediol degradation. Functionally, part of the PduCDE complex that catalyzes the dehydration of 1,2-propanediol (1,2-PD) to propionaldehyde. Localized in the bacterial microcompartment (BMC) dedicated to 1,2-PD degradation. Expression of a cosmid containing the full 21-gene pdu operon in E.coli allows E.coli to grow on 1,2-propanediol (1,2-PD) with the appearance of BMCs in its cytoplasm. In terms of biological role, the 1,2-PD-specific bacterial microcompartment (BMC) concentrates low levels of 1,2-PD catabolic enzymes, concentrates volatile reaction intermediates thus enhancing pathway flux and keeps the level of toxic, mutagenic propionaldehyde low. This Citrobacter freundii protein is Propanediol dehydratase small subunit.